Reading from the N-terminus, the 615-residue chain is Prickle planar cell polarity protein 3 (615 aa).

Positions 1–12 (MFARGSRRRRSG) are enriched in basic residues. Residues 1 to 26 (MFARGSRRRRSGRAPPEAEDPDRGQP) form a disordered region. The 109-residue stretch at 74–182 (SDFQRHSISD…IVRIFPVTIT (109 aa)) folds into the PET domain. 3 LIM zinc-binding domains span residues 184-249 (AICE…CLRP), 250-309 (RCQA…RHAE), and 310-373 (YCDG…SEPT). Disordered regions lie at residues 396-567 (ASFS…LGER) and 587-615 (TFNS…CIVA). Positions 405–415 (SETTTKGTSTE) are enriched in polar residues. Phosphoserine is present on residues serine 475 and serine 491. A compositionally biased stretch (basic residues) spans 508 to 531 (PSRRRHHHHNHHHHHNRHPSRRRH). The segment covering 537–555 (GSGSDSESCSSSPSSSSSE) has biased composition (low complexity). Basic and acidic residues predominate over residues 606–615 (QARDKNCIVA).

This sequence belongs to the prickle / espinas / testin family. In terms of assembly, interacts with VANGL2 via its C-terminus. The VANGL2-dependent membrane recruitment of PRICKLE3 is a prerequisite for its polarization. Interacts with WTIP. WTIP is involved in the recruitment of PRICKLE3 to the basal body. Interacts with MT-ATP8, a component of the mitochondrial complex V. In terms of tissue distribution, widely expressed.

It is found in the cytoplasm. The protein resides in the cell membrane. Its subcellular location is the mitochondrion. In terms of biological role, involved in the planar cell polarity (PCP) pathway that is essential for the polarization of epithelial cells during morphogenetic processes, including gastrulation and neurulation. PCP is maintained by two molecular modules, the global and the core modules, PRICKLE3 being part of the core module. Distinct complexes of the core module segregate to opposite sides of the cell, where they interact with the opposite complex in the neighboring cell at or near the adherents junctions. Involved in the organization of the basal body. Involved in cilia growth and positioning. Required for proper assembly, stability, and function of mitochondrial membrane ATP synthase (mitochondrial complex V). The chain is Prickle planar cell polarity protein 3 from Homo sapiens (Human).